The primary structure comprises 498 residues: Neuronal acetylcholine receptor subunit beta-4 (498 aa).

Residues 1-21 form the signal peptide; the sequence is MRRAPSLVLFFLVALCGRGNC. Residues 22–239 lie on the Extracellular side of the membrane; that stretch reads RVANAEEKLM…RKPLFYTINL (218 aa). Asn-36, Asn-93, Asn-138, and Asn-166 each carry an N-linked (GlcNAc...) asparagine glycan. Cys-153 and Cys-167 are disulfide-bonded. The chain crosses the membrane as a helical span at residues 240–255; sequence IIPCVLTTLLAILVFY. Residues 256-261 lie on the Cytoplasmic side of the membrane; the sequence is LPSDCG. Glu-262 lines the Na(+) pocket. Residues 262–277 traverse the membrane as a helical segment; it reads EKMTLCISVLLALTFF. The Extracellular segment spans residues 278 to 296; it reads LLLISKIVPPTSLDVPLIG. A helical transmembrane segment spans residues 297 to 321; the sequence is KYLMFTMVLVTFSIVTSVCVLNVHH. The Cytoplasmic segment spans residues 322–454; the sequence is RSPSTHTMAP…QSVVEDWKYV (133 aa). Residues 357–377 form a disordered region; it reads ARAFPPSKSCVTKPEATATST. The chain crosses the membrane as a helical span at residues 455 to 478; sequence AMVVDRLFLWVFMFVCVLGTVGLF. The Extracellular segment spans residues 479 to 498; it reads LPPLFQTHAASEGPYAAQRD.

It belongs to the ligand-gated ion channel (TC 1.A.9) family. Acetylcholine receptor (TC 1.A.9.1) subfamily. Beta-4/CHRNB4 sub-subfamily. Neuronal AChR is composed of two different types of subunits: alpha and beta. CHRNB4/Beta-4 subunit can be combined to CHRNA2/alpha-2, CHRNA3/alpha-3 or CHRNA4/alpha-4, CHRNA5/alpha-5 and CHRNB3/beta-3 to give rise to functional receptors. Forms stoichiometries such as (CHRNA3)2:(CHRNB4)3 or (CHRNA3:CHRNB4)2:CHRNB3. Interacts with RIC3; which is required for proper folding and assembly. Interacts with LYPD6.

Its subcellular location is the synaptic cell membrane. It is found in the cell membrane. It carries out the reaction Ca(2+)(in) = Ca(2+)(out). It catalyses the reaction K(+)(in) = K(+)(out). The enzyme catalyses Na(+)(in) = Na(+)(out). With respect to regulation, activated by a myriad of ligands such as acetylcholine, cytisine, nicotine, choline and epibatidine. The heteropentamer CHRNA3:CHRNB4 activity is blocked by the alpha-conotoxin ImI and AuIB. Component of neuronal acetylcholine receptors (nAChRs) that function as pentameric, ligand-gated cation channels with high calcium permeability among other activities. nAChRs are excitatory neurotrasnmitter receptors formed by a collection of nAChR subunits known to mediate synaptic transmission in the nervous system and the neuromuscular junction. Each nAchR subunit confers differential attributes to channel properties, including activation, deactivation and desensitization kinetics, pH sensitivity, cation permeability, and binding to allosteric modulators. CHRNB4 forms heteropentameric neuronal acetylcholine receptors with CHRNA2, CHRNA3 and CHRNA4, as well as CHRNA5 and CHRNB3 as accesory subunits. CHRNA3:CHRNB4 being predominant in neurons of the autonomic ganglia, it is known as ganglionic nicotinic receptor. CHRNA3:CHRNB4 or CHRNA3:CHRNA5:CHRNB4 play also an important role in the habenulo-interpeduncular tract, modulating the mesolimbic dopamine system and affecting reward circuits and addiction. Hypothalamic CHRNA3:CHRNB4 nAChR activation by nicotine leads to activation of POMC neurons and a decrease in food intake. The chain is Neuronal acetylcholine receptor subunit beta-4 from Homo sapiens (Human).